A 453-amino-acid chain; its full sequence is Probable glycine dehydrogenase (decarboxylating) subunit 1 (453 aa).

It belongs to the GcvP family. N-terminal subunit subfamily. In terms of assembly, the glycine cleavage system is composed of four proteins: P, T, L and H. In this organism, the P 'protein' is a heterodimer of two subunits.

The catalysed reaction is N(6)-[(R)-lipoyl]-L-lysyl-[glycine-cleavage complex H protein] + glycine + H(+) = N(6)-[(R)-S(8)-aminomethyldihydrolipoyl]-L-lysyl-[glycine-cleavage complex H protein] + CO2. The glycine cleavage system catalyzes the degradation of glycine. The P protein binds the alpha-amino group of glycine through its pyridoxal phosphate cofactor; CO(2) is released and the remaining methylamine moiety is then transferred to the lipoamide cofactor of the H protein. The protein is Probable glycine dehydrogenase (decarboxylating) subunit 1 of Erythrobacter litoralis (strain HTCC2594).